Here is a 349-residue protein sequence, read N- to C-terminus: D-alanine--D-alanine ligase (349 aa).

Positions 133–335 (QVLESATTIP…YSVLIEELVS (203 aa)) constitute an ATP-grasp domain. Residue 163 to 218 (EEKLIYPVFVKPANMGSSVGISKAENRTDLKQAIALALKYDSRVLIEQGVDAREIE) coordinates ATP. Mg(2+)-binding residues include Asp-289, Glu-302, and Asn-304.

Belongs to the D-alanine--D-alanine ligase family. Requires Mg(2+) as cofactor. It depends on Mn(2+) as a cofactor.

It localises to the cytoplasm. The catalysed reaction is 2 D-alanine + ATP = D-alanyl-D-alanine + ADP + phosphate + H(+). The protein operates within cell wall biogenesis; peptidoglycan biosynthesis. Cell wall formation. This is D-alanine--D-alanine ligase from Streptococcus mutans serotype c (strain ATCC 700610 / UA159).